The chain runs to 102 residues: Citrate lyase acyl carrier protein (102 aa).

O-(phosphoribosyl dephospho-coenzyme A)serine is present on Ser-14.

Belongs to the CitD family. As to quaternary structure, oligomer with a subunit composition of (alpha,beta,gamma)6.

It localises to the cytoplasm. In terms of biological role, covalent carrier of the coenzyme of citrate lyase. This Streptococcus pyogenes serotype M2 (strain MGAS10270) protein is Citrate lyase acyl carrier protein.